Consider the following 310-residue polypeptide: Ribosomal RNA small subunit methyltransferase H (310 aa).

S-adenosyl-L-methionine-binding positions include 33–35 (AGH), aspartate 53, phenylalanine 79, aspartate 100, and glutamine 107.

Belongs to the methyltransferase superfamily. RsmH family.

The protein localises to the cytoplasm. The catalysed reaction is cytidine(1402) in 16S rRNA + S-adenosyl-L-methionine = N(4)-methylcytidine(1402) in 16S rRNA + S-adenosyl-L-homocysteine + H(+). Functionally, specifically methylates the N4 position of cytidine in position 1402 (C1402) of 16S rRNA. The protein is Ribosomal RNA small subunit methyltransferase H of Desulfitobacterium hafniense (strain DSM 10664 / DCB-2).